The sequence spans 215 residues: Ras-related protein Rab-42 (215 aa).

GTP-binding residues include Gly19, Gly21, Lys22, Thr23, and Thr44. The Mg(2+) site is built by Thr23, Thr44, and Asp68. 5 residues coordinate GTP: Gly71, Lys128, Asp130, Ala157, and Lys158. Residues 196–215 form a disordered region; sequence HRSPNPRSSSRKQDSGTCQC. S-geranylgeranyl cysteine attachment occurs at residues Cys213 and Cys215.

The protein belongs to the small GTPase superfamily. Rab family. Requires Mg(2+) as cofactor.

The protein resides in the membrane. The catalysed reaction is GTP + H2O = GDP + phosphate + H(+). With respect to regulation, regulated by guanine nucleotide exchange factors (GEFs) which promote the exchange of bound GDP for free GTP. Regulated by GTPase activating proteins (GAPs) which increase the GTP hydrolysis activity. Inhibited by GDP dissociation inhibitors (GDIs). In terms of biological role, the small GTPases Rab are key regulators of intracellular membrane trafficking, from the formation of transport vesicles to their fusion with membranes. Rabs cycle between an inactive GDP-bound form and an active GTP-bound form that is able to recruit to membranes different sets of downstream effectors directly responsible for vesicle formation, movement, tethering and fusion. The physiological function of RAB42 remains undefined. The polypeptide is Ras-related protein Rab-42 (Mus musculus (Mouse)).